The following is a 733-amino-acid chain: Leucine-rich repeat neuronal protein 4 (733 aa).

The first 19 residues, 1-19, serve as a signal peptide directing secretion; that stretch reads MRWTLMLQLLQLLLQLLMA. At 20–676 the chain is on the extracellular side; that stretch reads QSQSLERISQ…CATFTTKPSS (657 aa). LRR repeat units follow at residues 62 to 82, 83 to 106, 107 to 128, 130 to 151, 154 to 175, 178 to 199, 207 to 230, 231 to 253, 256 to 278, and 281 to 302; these read GVTT…CLPR, TLRS…GRLP, ELRV…RDTL, ELRE…AGPS, SLRS…TFAC, ALRL…AFAG, ALEL…RNLP, KLKS…IFKM, NLRQ…IFQD, and NLQV…NSSQ. The N-linked (GlcNAc...) asparagine glycan is linked to N70. N183 is a glycosylation site (N-linked (GlcNAc...) asparagine). 5 N-linked (GlcNAc...) asparagine glycosylation sites follow: N291, N299, N327, N408, and N469. Positions 311–364 constitute an LRRCT domain; that stretch reads NPLICSCELAWLLVDVNKTVLHRAADTMCEPALGSTGPFSGPLSLSHLSNVCRS. The disordered stretch occupies residues 395–423; it reads STALSAQPGGSQQNITKVPSLTMTSPTQG. Positions 480–518 are disordered; the sequence is KYLEPLPTSPNPRSLPQTKQRTQATPRALHTDPPQDEIP. The segment covering 490–504 has biased composition (polar residues); that stretch reads NPRSLPQTKQRTQAT. The Fibronectin type-III domain maps to 576-675; that stretch reads TPDPPTLQGV…SCATFTTKPS (100 aa). N-linked (GlcNAc...) asparagine glycosylation is present at N619. A helical transmembrane segment spans residues 677 to 697; sequence VVIFWGLCTASGLLLVSTLVL. The Cytoplasmic portion of the chain corresponds to 698–733; that stretch reads SVCLWRQRWKPHRQFYDTHLVAFKNPARAEEVTQWE.

The protein localises to the membrane. In terms of biological role, may play an important role in hippocampus-dependent long-lasting memory. The protein is Leucine-rich repeat neuronal protein 4 (Lrrn4) of Mus musculus (Mouse).